Reading from the N-terminus, the 210-residue chain is Redox-sensing transcriptional repressor Rex (210 aa).

The H-T-H motif DNA-binding region spans 17 to 56; that stretch reads KYHRYLGDLLDRDIQRISSKELSDIIGFTASQIRQDLNNF. An NAD(+)-binding site is contributed by 91–96; it reads GAGNLG.

The protein belongs to the transcriptional regulatory Rex family. Homodimer.

Its subcellular location is the cytoplasm. Functionally, modulates transcription in response to changes in cellular NADH/NAD(+) redox state. The protein is Redox-sensing transcriptional repressor Rex of Clostridioides difficile (strain 630) (Peptoclostridium difficile).